The chain runs to 110 residues: Ig kappa chain V region 3547 (110 aa).

The tract at residues 1–23 (AYDMTQTPSSVSAAVGGTVTINC) is framework-1. Residues 24-34 (QASEDISANLA) are complementarity-determining-1. Residues 35-49 (WYQQKPGQPPKLLIY) are framework-2. The interval 50–56 (AASDLAS) is complementarity-determining-2. The framework-3 stretch occupies residues 57-88 (GVPSRFKGSGSGTEYTLTISGVQCADAATYYC). Positions 89 to 99 (QSADYSGSAVT) are complementarity-determining-3. The framework-4 stretch occupies residues 100-109 (FGGGTEVVVK).

In Oryctolagus cuniculus (Rabbit), this protein is Ig kappa chain V region 3547.